A 1199-amino-acid chain; its full sequence is DNA-directed RNA polymerase subunit beta' (1199 aa).

Positions 60, 62, 75, and 78 each coordinate Zn(2+). Residues D449, D451, and D453 each coordinate Mg(2+). The Zn(2+) site is built by C818, C892, C899, and C902.

It belongs to the RNA polymerase beta' chain family. The RNAP catalytic core consists of 2 alpha, 1 beta, 1 beta' and 1 omega subunit. When a sigma factor is associated with the core the holoenzyme is formed, which can initiate transcription. Requires Mg(2+) as cofactor. It depends on Zn(2+) as a cofactor.

The enzyme catalyses RNA(n) + a ribonucleoside 5'-triphosphate = RNA(n+1) + diphosphate. In terms of biological role, DNA-dependent RNA polymerase catalyzes the transcription of DNA into RNA using the four ribonucleoside triphosphates as substrates. The sequence is that of DNA-directed RNA polymerase subunit beta' from Bacillus velezensis (strain DSM 23117 / BGSC 10A6 / LMG 26770 / FZB42) (Bacillus amyloliquefaciens subsp. plantarum).